Here is a 179-residue protein sequence, read N- to C-terminus: RNA pyrophosphohydrolase (179 aa).

The Nudix hydrolase domain occupies G6–K149. A Nudix box motif is present at residues G38–G59.

It belongs to the Nudix hydrolase family. RppH subfamily. A divalent metal cation serves as cofactor.

Accelerates the degradation of transcripts by removing pyrophosphate from the 5'-end of triphosphorylated RNA, leading to a more labile monophosphorylated state that can stimulate subsequent ribonuclease cleavage. The chain is RNA pyrophosphohydrolase from Ruthia magnifica subsp. Calyptogena magnifica.